The sequence spans 505 residues: Maturase K (505 aa).

This sequence belongs to the intron maturase 2 family. MatK subfamily.

It is found in the plastid. It localises to the chloroplast. Its function is as follows. Usually encoded in the trnK tRNA gene intron. Probably assists in splicing its own and other chloroplast group II introns. The chain is Maturase K from Nuphar advena (Common spatterdock).